The chain runs to 416 residues: Tyrosine--tRNA ligase (416 aa).

Tyr-40 contributes to the L-tyrosine binding site. A 'HIGH' region motif is present at residues Ala-45–His-54. L-tyrosine-binding residues include Tyr-177 and Gln-181. The short motif at Lys-237–Ser-241 is the 'KMSKS' region element. Lys-240 lines the ATP pocket. The 66-residue stretch at Leu-351 to Ala-416 folds into the S4 RNA-binding domain.

This sequence belongs to the class-I aminoacyl-tRNA synthetase family. TyrS type 1 subfamily. Homodimer.

It is found in the cytoplasm. It carries out the reaction tRNA(Tyr) + L-tyrosine + ATP = L-tyrosyl-tRNA(Tyr) + AMP + diphosphate + H(+). In terms of biological role, catalyzes the attachment of tyrosine to tRNA(Tyr) in a two-step reaction: tyrosine is first activated by ATP to form Tyr-AMP and then transferred to the acceptor end of tRNA(Tyr). The polypeptide is Tyrosine--tRNA ligase (Cereibacter sphaeroides (strain ATCC 17025 / ATH 2.4.3) (Rhodobacter sphaeroides)).